We begin with the raw amino-acid sequence, 421 residues long: Subtilisin-like protease 2 (421 aa).

An N-terminal signal peptide occupies residues Met-1 to Gly-16. Residues Asp-17–Ala-122 constitute a propeptide that is removed on maturation. The Inhibitor I9 domain maps to Gln-36–Ala-122. Residues Arg-131–Phe-421 enclose the Peptidase S8 domain. Catalysis depends on charge relay system residues Asp-169 and His-201. 3 N-linked (GlcNAc...) asparagine glycosylation sites follow: Asn-248, Asn-261, and Asn-348. Ser-357 functions as the Charge relay system in the catalytic mechanism. The N-linked (GlcNAc...) asparagine glycan is linked to Asn-388.

It belongs to the peptidase S8 family.

The protein resides in the secreted. Secreted subtilisin-like serine protease with keratinolytic activity that contributes to pathogenicity. In Trichophyton equinum (Horse ringworm fungus), this protein is Subtilisin-like protease 2 (SUB2).